A 240-amino-acid chain; its full sequence is Dihydromonapterin reductase (240 aa).

Residue Tyr152 is the Proton acceptor of the active site.

It belongs to the short-chain dehydrogenases/reductases (SDR) family. FolM subfamily.

The catalysed reaction is (6S)-5,6,7,8-tetrahydrofolate + NADP(+) = 7,8-dihydrofolate + NADPH + H(+). It carries out the reaction 7,8-dihydromonapterin + NADPH + H(+) = 5,6,7,8-tetrahydromonapterin + NADP(+). In terms of biological role, catalyzes the reduction of dihydromonapterin to tetrahydromonapterin. Also has lower activity with dihydrofolate. The sequence is that of Dihydromonapterin reductase (folM) from Escherichia coli O6:K15:H31 (strain 536 / UPEC).